The sequence spans 362 residues: RNA-binding protein 4 (362 aa).

2 RRM domains span residues 2 to 72 (VKLF…ASKN) and 78 to 148 (TKLH…LSTS). A Glycyl lysine isopeptide (Lys-Gly) (interchain with G-Cter in SUMO2) cross-link involves residue K79. S86 is subject to Phosphoserine. Residue K92 forms a Glycyl lysine isopeptide (Lys-Gly) (interchain with G-Cter in SUMO2) linkage. The segment at 160–177 (SGCYRCGKEGHWSKECPV) adopts a CCHC-type zinc-finger fold. Positions 196–362 (AVRTPYTMGY…YADRARYSAF (167 aa)) are interaction with TNPO3. Residues 306 to 336 (RSPLRRATGPVPTVGEGYGYGHESELSQGSS) are disordered. S307 carries the phosphoserine modification.

Interacts with TNPO3; the interaction mediates nuclear import of the protein and is disrupted by nuclear Ran bound to GTP. Interacts with EIF4G1 and WT1. Interacts with EIF4A1; the interaction is modulated under stress-induced conditions. Interacts with AGO1. Interacts with AGO2; the interaction occurs under both cell proliferation and differentiation conditions and in an RNA- and phosphorylation-independent manner. Interacts with DDX5; the interaction occurs in an RNA-independent manner. Interacts with RBPMS; the interaction allows cooperative assembly of RNA-bound stable cell-specific alternative splicing regulatory complexes. Post-translationally, phosphorylated. Phosphorylated in vitro on Ser-307 by SRPK1. Phosphorylation on Ser-307 is induced upon cell stress signaling, which alters its subcellular localization and may modulate its activity on IRES-mediated mRNA translation. Phosphorylation on Ser-307 is induced upon cell muscle differentiation.

It is found in the nucleus. Its subcellular location is the nucleolus. It localises to the nucleus speckle. The protein localises to the cytoplasm. The protein resides in the cytoplasmic granule. RNA-binding factor involved in multiple aspects of cellular processes like alternative splicing of pre-mRNA and translation regulation. Modulates alternative 5'-splice site and exon selection. Acts as a muscle cell differentiation-promoting factor. Activates exon skipping of the PTB pre-mRNA during muscle cell differentiation. Antagonizes the activity of the splicing factor PTBP1 to modulate muscle cell-specific exon selection of alpha tropomyosin. Binds to intronic pyrimidine-rich sequence of the TPM1 and MAPT pre-mRNAs. Required for the translational activation of PER1 mRNA in response to circadian clock. Binds directly to the 3'-UTR of the PER1 mRNA. Exerts a suppressive activity on Cap-dependent translation via binding to CU-rich responsive elements within the 3'UTR of mRNAs, a process increased under stress conditions or during myocytes differentiation. Recruits EIF4A1 to stimulate IRES-dependent translation initiation in respons to cellular stress. Associates to internal ribosome entry segment (IRES) in target mRNA species under stress conditions. Plays a role for miRNA-guided RNA cleavage and translation suppression by promoting association of AGO2-containing miRNPs with their cognate target mRNAs. Associates with miRNAs during muscle cell differentiation. Binds preferentially to 5'-CGCGCG[GCA]-3' motif in vitro. In Bos taurus (Bovine), this protein is RNA-binding protein 4 (RBM4).